A 333-amino-acid chain; its full sequence is 4-hydroxyproline 2-epimerase (333 aa).

Cysteine 90 acts as the Proton acceptor in catalysis. Substrate-binding positions include 91–92 (GH), histidine 223, and aspartate 249. The active-site Proton donor is the cysteine 253. Residue 254 to 255 (GT) participates in substrate binding.

It belongs to the proline racemase family.

It carries out the reaction trans-4-hydroxy-L-proline = cis-4-hydroxy-D-proline. In terms of biological role, catalyzes the epimerization of trans-4-hydroxy-L-proline (t4LHyp) to cis-4-hydroxy-D-proline (c4DHyp). May be involved in a degradation pathway of t4LHyp, which would allow S.novella to grow on t4LHyp as a sole carbon source. In Ancylobacter novellus (strain ATCC 8093 / DSM 506 / JCM 20403 / CCM 1077 / IAM 12100 / NBRC 12443 / NCIMB 10456) (Starkeya novella), this protein is 4-hydroxyproline 2-epimerase.